Here is a 231-residue protein sequence, read N- to C-terminus: Uracil-DNA glycosylase (231 aa).

D70 functions as the Proton acceptor in the catalytic mechanism.

This sequence belongs to the uracil-DNA glycosylase (UDG) superfamily. UNG family.

The protein resides in the cytoplasm. It carries out the reaction Hydrolyzes single-stranded DNA or mismatched double-stranded DNA and polynucleotides, releasing free uracil.. In terms of biological role, excises uracil residues from the DNA which can arise as a result of misincorporation of dUMP residues by DNA polymerase or due to deamination of cytosine. This is Uracil-DNA glycosylase from Campylobacter curvus (strain 525.92).